Here is a 1164-residue protein sequence, read N- to C-terminus: DNA-directed RNA polymerase 132 kDa polypeptide (1164 aa).

This sequence belongs to the RNA polymerase beta chain family. In terms of assembly, the DNA-dependent RNA polymerase used for intermediate and late genes expression consists of eight subunits (147) kDa, (133) kDa, (35) kDa, (30) kDa, (22) kDa, (19) kDa, (18) kDa and (7) kDa totalling more than 500 kDa in mass. The same holoenzyme, with the addition of the transcription-specificity factor RAP94, is used for early gene expression.

The protein localises to the virion. It catalyses the reaction RNA(n) + a ribonucleoside 5'-triphosphate = RNA(n+1) + diphosphate. In terms of biological role, part of the DNA-dependent RNA polymerase which catalyzes the transcription of viral DNA into RNA using the four ribonucleoside triphosphates as substrates. Responsible for the transcription of early, intermediate and late genes. DNA-dependent RNA polymerase associates with the early transcription factor (ETF), itself composed of D6 and A7, thereby allowing the early genes transcription. Late transcription, and probably also intermediate transcription, require newly synthesized RNA polymerase. The protein is DNA-directed RNA polymerase 132 kDa polypeptide (RPO132) of Oryctolagus cuniculus (Rabbit).